The following is a 303-amino-acid chain: N-acetyl-D-glucosamine kinase (303 aa).

Residues 4-11 (GFDIGGTK) and 133-140 (GVGGGLVL) contribute to the ATP site. Zn(2+) is bound by residues His157, Cys177, Cys179, and Cys184.

This sequence belongs to the ROK (NagC/XylR) family. NagK subfamily.

The catalysed reaction is N-acetyl-D-glucosamine + ATP = N-acetyl-D-glucosamine 6-phosphate + ADP + H(+). Its pathway is cell wall biogenesis; peptidoglycan recycling. Catalyzes the phosphorylation of N-acetyl-D-glucosamine (GlcNAc) derived from cell-wall degradation, yielding GlcNAc-6-P. In Salmonella gallinarum (strain 287/91 / NCTC 13346), this protein is N-acetyl-D-glucosamine kinase.